A 320-amino-acid chain; its full sequence is ATP-dependent 6-phosphofructokinase (320 aa).

ATP is bound at residue G12. Residues R22–R26 and R55–D60 each bind ADP. Residues R73–F74 and G103–S106 each bind ATP. A Mg(2+)-binding site is contributed by D104. T126–D128 lines the substrate pocket. The active-site Proton acceptor is D128. R155 serves as a coordination point for ADP. Substrate-binding positions include R163 and M170–R172. ADP contacts are provided by residues G186–E188, K212, and K214–H216. Residues E223, R244, and H250–R253 each bind substrate.

Belongs to the phosphofructokinase type A (PFKA) family. ATP-dependent PFK group I subfamily. Prokaryotic clade 'B1' sub-subfamily. In terms of assembly, homotetramer. The cofactor is Mg(2+).

Its subcellular location is the cytoplasm. The enzyme catalyses beta-D-fructose 6-phosphate + ATP = beta-D-fructose 1,6-bisphosphate + ADP + H(+). The protein operates within carbohydrate degradation; glycolysis; D-glyceraldehyde 3-phosphate and glycerone phosphate from D-glucose: step 3/4. Allosterically activated by ADP and other diphosphonucleosides, and allosterically inhibited by phosphoenolpyruvate. Its function is as follows. Catalyzes the phosphorylation of D-fructose 6-phosphate to fructose 1,6-bisphosphate by ATP, the first committing step of glycolysis. The polypeptide is ATP-dependent 6-phosphofructokinase (Buchnera aphidicola subsp. Acyrthosiphon pisum (strain 5A)).